The sequence spans 767 residues: Mst2 complex subunit nto1 (767 aa).

A PHD-type 1 zinc finger spans residues 194–244 (DGRCVICNEAECENSNAIVFCDNCNTSVHQNCYGIPFVPEGQWFCKKCLLA). A C2HC pre-PHD-type zinc finger spans residues 248 to 281 (VICCAFCPDRDGAFCTTLDGRWCHTICAIAIPEI). A PHD-type 2 zinc finger spans residues 305–363 (LVCCICKLRWGTCVQCSDKNCYAAYHITCARRAGFFYKIYSHSASYDSVDMETYCDKHT). Positions 724 to 752 (VTGQSNHALPNSVTKKNGTKQPYTKNSLP) are enriched in polar residues. A disordered region spans residues 724-767 (VTGQSNHALPNSVTKKNGTKQPYTKNSLPFNERITRSKAKKNYS).

As to quaternary structure, component of the mst2 complex composed of at least eaf6, mst2, nto1, pdp3, ptf1, ptf2 and tfg3.

It is found in the cytoplasm. Its subcellular location is the nucleus. In terms of biological role, component of the mst2 complex which is a highly specific H3 lysine 14 (H3K14) acetyltransferase that functions together with gcn5 to regulate global levels of H3K14 acetylation (H3K14ac), critical for DNA damage checkpoint activation. In Schizosaccharomyces pombe (strain 972 / ATCC 24843) (Fission yeast), this protein is Mst2 complex subunit nto1 (nto1).